A 100-amino-acid chain; its full sequence is Urease subunit gamma (100 aa).

It belongs to the urease gamma subunit family. Heterotrimer of UreA (gamma), UreB (beta) and UreC (alpha) subunits. Three heterotrimers associate to form the active enzyme.

The protein resides in the cytoplasm. The enzyme catalyses urea + 2 H2O + H(+) = hydrogencarbonate + 2 NH4(+). It participates in nitrogen metabolism; urea degradation; CO(2) and NH(3) from urea (urease route): step 1/1. The chain is Urease subunit gamma from Saccharopolyspora erythraea (strain ATCC 11635 / DSM 40517 / JCM 4748 / NBRC 13426 / NCIMB 8594 / NRRL 2338).